The primary structure comprises 614 residues: Sulfite reductase [NADPH] flavoprotein alpha-component (614 aa).

A Flavodoxin-like domain is found at 79–217 (LTIIFASQTG…AATEWRKQVL (139 aa)). Residues 85-90 (SQTGNA), 132-135 (STNG), and 168-177 (LGDSSYQFFC) contribute to the FMN site. Residues 249–463 (EQPYTASLST…VEHNNNFKLP (215 aa)) enclose the FAD-binding FR-type domain. FAD is bound by residues T337, T371, 401–404 (RLYS), 419–421 (TVG), Y425, and 434–437 (GGAS). NADP(+) contacts are provided by residues 534–535 (SR), 540–544 (KVYVQ), and D576. Residue Y614 participates in FAD binding.

Belongs to the NADPH-dependent sulphite reductase flavoprotein subunit CysJ family. It in the N-terminal section; belongs to the flavodoxin family. This sequence in the C-terminal section; belongs to the flavoprotein pyridine nucleotide cytochrome reductase family. Alpha(8)-beta(8). The alpha component is a flavoprotein, the beta component is a hemoprotein. FAD is required as a cofactor. FMN serves as cofactor.

The catalysed reaction is hydrogen sulfide + 3 NADP(+) + 3 H2O = sulfite + 3 NADPH + 4 H(+). It functions in the pathway sulfur metabolism; hydrogen sulfide biosynthesis; hydrogen sulfide from sulfite (NADPH route): step 1/1. Its function is as follows. Component of the sulfite reductase complex that catalyzes the 6-electron reduction of sulfite to sulfide. This is one of several activities required for the biosynthesis of L-cysteine from sulfate. The flavoprotein component catalyzes the electron flow from NADPH -&gt; FAD -&gt; FMN to the hemoprotein component. The sequence is that of Sulfite reductase [NADPH] flavoprotein alpha-component from Vibrio cholerae serotype O1 (strain ATCC 39315 / El Tor Inaba N16961).